An 883-amino-acid chain; its full sequence is Valine--tRNA ligase (883 aa).

The short motif at 51 to 61 (PNVTGKLHLGH) is the 'HIGH' region element. A 'KMSKS' region motif is present at residues 527–531 (KMSKS). Residue Lys530 participates in ATP binding. A coiled-coil region spans residues 811 to 847 (LEALIDLNVEIARLEKELEKWNKEVARVQGKLNNERF).

It belongs to the class-I aminoacyl-tRNA synthetase family. ValS type 1 subfamily. Monomer.

It is found in the cytoplasm. It catalyses the reaction tRNA(Val) + L-valine + ATP = L-valyl-tRNA(Val) + AMP + diphosphate. Functionally, catalyzes the attachment of valine to tRNA(Val). As ValRS can inadvertently accommodate and process structurally similar amino acids such as threonine, to avoid such errors, it has a 'posttransfer' editing activity that hydrolyzes mischarged Thr-tRNA(Val) in a tRNA-dependent manner. The protein is Valine--tRNA ligase of Listeria monocytogenes serovar 1/2a (strain ATCC BAA-679 / EGD-e).